A 66-amino-acid chain; its full sequence is Large ribosomal subunit protein bL35 (66 aa).

The protein belongs to the bacterial ribosomal protein bL35 family.

This is Large ribosomal subunit protein bL35 from Brucella anthropi (strain ATCC 49188 / DSM 6882 / CCUG 24695 / JCM 21032 / LMG 3331 / NBRC 15819 / NCTC 12168 / Alc 37) (Ochrobactrum anthropi).